The chain runs to 104 residues: Large ribosomal subunit protein uL24 (104 aa).

This sequence belongs to the universal ribosomal protein uL24 family. Part of the 50S ribosomal subunit.

Its function is as follows. One of two assembly initiator proteins, it binds directly to the 5'-end of the 23S rRNA, where it nucleates assembly of the 50S subunit. Functionally, one of the proteins that surrounds the polypeptide exit tunnel on the outside of the subunit. This Colwellia psychrerythraea (strain 34H / ATCC BAA-681) (Vibrio psychroerythus) protein is Large ribosomal subunit protein uL24.